A 433-amino-acid polypeptide reads, in one-letter code: 3-phosphoshikimate 1-carboxyvinyltransferase (433 aa).

3-phosphoshikimate is bound by residues lysine 21, serine 22, and arginine 26. Lysine 21 contributes to the phosphoenolpyruvate binding site. Positions 92 and 120 each coordinate phosphoenolpyruvate. Positions 166, 168, 317, and 344 each coordinate 3-phosphoshikimate. Glutamine 168 is a binding site for phosphoenolpyruvate. Catalysis depends on aspartate 317, which acts as the Proton acceptor. Residues arginine 348 and arginine 391 each contribute to the phosphoenolpyruvate site.

Belongs to the EPSP synthase family. In terms of assembly, monomer.

The protein resides in the cytoplasm. The catalysed reaction is 3-phosphoshikimate + phosphoenolpyruvate = 5-O-(1-carboxyvinyl)-3-phosphoshikimate + phosphate. It participates in metabolic intermediate biosynthesis; chorismate biosynthesis; chorismate from D-erythrose 4-phosphate and phosphoenolpyruvate: step 6/7. Catalyzes the transfer of the enolpyruvyl moiety of phosphoenolpyruvate (PEP) to the 5-hydroxyl of shikimate-3-phosphate (S3P) to produce enolpyruvyl shikimate-3-phosphate and inorganic phosphate. This Caldicellulosiruptor bescii (strain ATCC BAA-1888 / DSM 6725 / KCTC 15123 / Z-1320) (Anaerocellum thermophilum) protein is 3-phosphoshikimate 1-carboxyvinyltransferase.